A 66-amino-acid chain; its full sequence is Conotoxin Cal5.2 (66 aa).

A signal peptide spans 1 to 20; it reads MMYCLPVVCILLLLIPSSAT. A propeptide spanning residues 21 to 51 is cleaved from the precursor; it reads FVVESRLEKDQAQSFTGDAWKRVSPIHEMIQ. A Valine amide modification is found at valine 65.

The protein belongs to the conotoxin T superfamily. Post-translationally, contains 2 disulfide bonds that can be either 'C1-C3, C2-C4' or 'C1-C4, C2-C3', since these disulfide connectivities have been observed for conotoxins with cysteine framework V (for examples, see AC P0DQQ7 and AC P81755). Expressed by the venom duct.

It is found in the secreted. In terms of biological role, probable neurotoxin with unknown target. Possibly targets ion channels. The chain is Conotoxin Cal5.2 from Californiconus californicus (California cone).